The primary structure comprises 324 residues: Phthalate 4,5-dioxygenase oxygenase reductase subunit (324 aa).

An FAD-binding FR-type domain is found at 9–111 (DGFTGLKVIA…ATPQNEFELI (103 aa)). 115–229 (RQFIFVAGGI…PGSIHFESFG (115 aa)) is an NAD(+) binding site. Residues 241–324 (FSVTLGRSGI…ARNDVLVLDL (84 aa)) enclose the 2Fe-2S ferredoxin-type domain. [2Fe-2S] cluster contacts are provided by Cys275, Cys280, Cys283, and Cys311.

It belongs to the PDR/VanB family. In terms of assembly, this dioxygenase system consists of two proteins: phthalate oxygenase and phthalate oxygenase reductase. FMN serves as cofactor.

The catalysed reaction is phthalate + NADH + O2 + H(+) = cis-4,5-dihydroxycyclohexa-2,6-diene-1,2-dicarboxylate + NAD(+). It functions in the pathway xenobiotic degradation; phthalate degradation; 3,4-dihydroxybenzoate from phthalate: step 1/3. This chain is Phthalate 4,5-dioxygenase oxygenase reductase subunit (pht2), found in Pseudomonas putida (Arthrobacter siderocapsulatus).